We begin with the raw amino-acid sequence, 205 residues long: MRPDTSRDPVAGPDSGPEPPFPIRLAGPVIKGFGRGSKELGIPTANIPADGLAEYPDLQVGVYYGVVALNPAQSEVPSTSAQILPAVLSIGYNPFYKNTTRSIEIHIMPPLTAPSPTATGTPGHVTFHKLPDFYGTSLKLLILGYIRPEYDYVSAEALIEDIRVDCEVARRSLQRGAYVRYLGAGADENEENEEVQEQRRWLTTF.

Residues 1–24 (MRPDTSRDPVAGPDSGPEPPFPIR) form a disordered region. 2 residues coordinate Mg(2+): Thr-44 and Asn-46. The Nucleophile role is filled by Glu-104.

The protein belongs to the flavokinase family. Zn(2+) serves as cofactor. It depends on Mg(2+) as a cofactor.

It carries out the reaction riboflavin + ATP = FMN + ADP + H(+). It participates in cofactor biosynthesis; FMN biosynthesis; FMN from riboflavin (ATP route): step 1/1. Catalyzes the phosphorylation of riboflavin (vitamin B2) to form flavin mononucleotide (FMN) coenzyme. In Aspergillus terreus (strain NIH 2624 / FGSC A1156), this protein is Riboflavin kinase (fmn1).